The chain runs to 255 residues: MVDPVAALCNYNVLEVIFSYLELDDLSHCSQVCKSWYHFLNDENSDVWRWHCLNKLPKESLKSDLLSSVPTYKTKLRAYFHAWSPNDCSRNVYIKPNGFTLHRNPVAQSTDAARGKIGFRHGRHTWEVIWEGPLGTVAVIGISTKEAALQCHGYVALLGSDDQSWGWNLVENHLLHNGDMQGSYPLLNNAPKYQVGERIRVILDCEDNTLSFEKNYEFLGVAFRGLPDKKLYPTVSAVYGNTEVSMVYLGTPLDG.

Positions 3–51 constitute an F-box domain; it reads DPVAALCNYNVLEVIFSYLELDDLSHCSQVCKSWYHFLNDENSDVWRWH. Residues 61 to 253 enclose the B30.2/SPRY domain; it reads LKSDLLSSVP…VSMVYLGTPL (193 aa).

Belongs to the FBXO45/Fsn family. As to quaternary structure, component of an E3 ubiquitin ligase complex composed of hiw and Fsn.

It is found in the synapse. The protein operates within protein modification; protein ubiquitination. Functionally, required in the presynaptic motoneuron to down-regulate the levels of wnd and restrain synaptic terminal growth at the neuromuscular junction (NMJ). This is F-box/SPRY domain-containing protein 1 from Drosophila sechellia (Fruit fly).